We begin with the raw amino-acid sequence, 406 residues long: Cysteine desulfurase (406 aa).

Lys226 is modified (N6-(pyridoxal phosphate)lysine). Cys364 (cysteine persulfide intermediate) is an active-site residue.

The protein belongs to the class-V pyridoxal-phosphate-dependent aminotransferase family. Csd subfamily. Homodimer. Interacts with SufE and the SufBCD complex composed of SufB, SufC and SufD. The interaction with SufE is required to mediate the direct transfer of the sulfur atom from the S-sulfanylcysteine. The cofactor is pyridoxal 5'-phosphate.

The protein localises to the cytoplasm. It carries out the reaction (sulfur carrier)-H + L-cysteine = (sulfur carrier)-SH + L-alanine. The catalysed reaction is L-selenocysteine + AH2 = hydrogenselenide + L-alanine + A + H(+). Its pathway is cofactor biosynthesis; iron-sulfur cluster biosynthesis. In terms of biological role, cysteine desulfurases mobilize the sulfur from L-cysteine to yield L-alanine, an essential step in sulfur metabolism for biosynthesis of a variety of sulfur-containing biomolecules. Component of the suf operon, which is activated and required under specific conditions such as oxidative stress and iron limitation. Acts as a potent selenocysteine lyase in vitro, that mobilizes selenium from L-selenocysteine. Selenocysteine lyase activity is however unsure in vivo. This is Cysteine desulfurase from Escherichia coli O7:K1 (strain IAI39 / ExPEC).